Reading from the N-terminus, the 319-residue chain is L-tryptophan isonitrile synthase AmbI1 (319 aa).

This sequence belongs to the isocyanide synthase family.

The catalysed reaction is D-ribulose 5-phosphate + L-tryptophan = (2S)-3-(1H-indol-3-yl)-2-isocyanopropanoate + hydroxyacetone + formaldehyde + phosphate + H2O + H(+). Its function is as follows. Involved in the biosynthesis of ambiguines, a family of hapalindole-type alkaloids. Responsible for the synthesis of the isonitrile group on tryptophan using ribulose 5-phosphate as the source of the carbon atom. The protein is L-tryptophan isonitrile synthase AmbI1 of Fischerella ambigua (strain UTEX 1903).